The primary structure comprises 508 residues: Light-independent protochlorophyllide reductase subunit B (508 aa).

A [4Fe-4S] cluster-binding site is contributed by Asp36. Asp294 (proton donor) is an active-site residue. Residue 429–430 participates in substrate binding; the sequence is GM.

It belongs to the ChlB/BchB/BchZ family. As to quaternary structure, protochlorophyllide reductase is composed of three subunits; ChlL, ChlN and ChlB. Forms a heterotetramer of two ChlB and two ChlN subunits. The cofactor is [4Fe-4S] cluster.

The enzyme catalyses chlorophyllide a + oxidized 2[4Fe-4S]-[ferredoxin] + 2 ADP + 2 phosphate = protochlorophyllide a + reduced 2[4Fe-4S]-[ferredoxin] + 2 ATP + 2 H2O. It functions in the pathway porphyrin-containing compound metabolism; chlorophyll biosynthesis (light-independent). Component of the dark-operative protochlorophyllide reductase (DPOR) that uses Mg-ATP and reduced ferredoxin to reduce ring D of protochlorophyllide (Pchlide) to form chlorophyllide a (Chlide). This reaction is light-independent. The NB-protein (ChlN-ChlB) is the catalytic component of the complex. The sequence is that of Light-independent protochlorophyllide reductase subunit B from Rippkaea orientalis (strain PCC 8801 / RF-1) (Cyanothece sp. (strain PCC 8801)).